A 135-amino-acid chain; its full sequence is Small ribosomal subunit protein uS12 (135 aa).

D89 carries the post-translational modification 3-methylthioaspartic acid. Residues 101 to 135 (SLDTSGVADRKQSRSKYGAKQPKAGAAAPAKGKGR) form a disordered region. The span at 118-135 (GAKQPKAGAAAPAKGKGR) shows a compositional bias: low complexity.

It belongs to the universal ribosomal protein uS12 family. Part of the 30S ribosomal subunit. Contacts proteins S8 and S17. May interact with IF1 in the 30S initiation complex.

Functionally, with S4 and S5 plays an important role in translational accuracy. Interacts with and stabilizes bases of the 16S rRNA that are involved in tRNA selection in the A site and with the mRNA backbone. Located at the interface of the 30S and 50S subunits, it traverses the body of the 30S subunit contacting proteins on the other side and probably holding the rRNA structure together. The combined cluster of proteins S8, S12 and S17 appears to hold together the shoulder and platform of the 30S subunit. The chain is Small ribosomal subunit protein uS12 from Chlorobium limicola (strain DSM 245 / NBRC 103803 / 6330).